Consider the following 687-residue polypeptide: Glycine--tRNA ligase beta subunit (687 aa).

The protein belongs to the class-II aminoacyl-tRNA synthetase family. In terms of assembly, tetramer of two alpha and two beta subunits.

The protein localises to the cytoplasm. It catalyses the reaction tRNA(Gly) + glycine + ATP = glycyl-tRNA(Gly) + AMP + diphosphate. This is Glycine--tRNA ligase beta subunit from Neisseria meningitidis serogroup C / serotype 2a (strain ATCC 700532 / DSM 15464 / FAM18).